The chain runs to 404 residues: D-galactonate dehydratase family member PC1_0802 (404 aa).

Asparagine 37 and histidine 122 together coordinate substrate. The Proton donor/acceptor role is filled by tyrosine 159. Mg(2+) is bound at residue aspartate 212. Histidine 214 serves as the catalytic Proton donor/acceptor. The Mg(2+) site is built by glutamate 238 and glutamate 264. Positions 264, 285, 314, 318, and 341 each coordinate substrate.

Belongs to the mandelate racemase/muconate lactonizing enzyme family. GalD subfamily. It depends on Mg(2+) as a cofactor.

The catalysed reaction is D-mannonate = 2-dehydro-3-deoxy-D-gluconate + H2O. Functionally, has low D-mannonate dehydratase activity (in vitro), suggesting that this is not a physiological substrate and that it has no significant role in D-mannonate degradation in vivo. Has no detectable activity with a panel of 70 other acid sugars (in vitro). This chain is D-galactonate dehydratase family member PC1_0802, found in Pectobacterium carotovorum subsp. carotovorum (strain PC1).